The chain runs to 645 residues: Translation factor GUF1 homolog, mitochondrial (645 aa).

In terms of domain architecture, tr-type G spans 40–215 (DKIRNFGIVA…AIIDRVPAPT (176 aa)). GTP contacts are provided by residues 49-56 (AHVDHGKS), 108-112 (DTPGH), and 162-165 (NKID).

Belongs to the TRAFAC class translation factor GTPase superfamily. Classic translation factor GTPase family. LepA subfamily.

It is found in the mitochondrion inner membrane. The catalysed reaction is GTP + H2O = GDP + phosphate + H(+). Its function is as follows. Promotes mitochondrial protein synthesis. May act as a fidelity factor of the translation reaction, by catalyzing a one-codon backward translocation of tRNAs on improperly translocated ribosomes. Binds to mitochondrial ribosomes in a GTP-dependent manner. The chain is Translation factor GUF1 homolog, mitochondrial from Caenorhabditis elegans.